The sequence spans 181 residues: 6,7-dimethyl-8-ribityllumazine synthase (181 aa).

Residues phenylalanine 23, 61–63 (SFE), and 85–87 (AVI) each bind 5-amino-6-(D-ribitylamino)uracil. Residue 90–91 (QT) coordinates (2S)-2-hydroxy-3-oxobutyl phosphate. Catalysis depends on histidine 93, which acts as the Proton donor. 5-amino-6-(D-ribitylamino)uracil is bound at residue phenylalanine 118. Arginine 132 contributes to the (2S)-2-hydroxy-3-oxobutyl phosphate binding site.

The protein belongs to the DMRL synthase family.

It catalyses the reaction (2S)-2-hydroxy-3-oxobutyl phosphate + 5-amino-6-(D-ribitylamino)uracil = 6,7-dimethyl-8-(1-D-ribityl)lumazine + phosphate + 2 H2O + H(+). The protein operates within cofactor biosynthesis; riboflavin biosynthesis; riboflavin from 2-hydroxy-3-oxobutyl phosphate and 5-amino-6-(D-ribitylamino)uracil: step 1/2. Functionally, catalyzes the formation of 6,7-dimethyl-8-ribityllumazine by condensation of 5-amino-6-(D-ribitylamino)uracil with 3,4-dihydroxy-2-butanone 4-phosphate. This is the penultimate step in the biosynthesis of riboflavin. The chain is 6,7-dimethyl-8-ribityllumazine synthase from Synechococcus elongatus (strain ATCC 33912 / PCC 7942 / FACHB-805) (Anacystis nidulans R2).